The sequence spans 174 residues: Adipose-secreted signaling protein (174 aa).

It belongs to the ADISSP family.

It localises to the secreted. Functionally, may be involved in thermogenesis and glucose homeostasis. The polypeptide is Adipose-secreted signaling protein (Xenopus tropicalis (Western clawed frog)).